The chain runs to 302 residues: Urease accessory protein UreG (302 aa).

3 stretches are compositionally biased toward basic and acidic residues: residues 1–32, 40–56, and 64–76; these read MHDP…DHVH, HEHE…EHGH, and HAHE…THEH. The tract at residues 1–76 is disordered; the sequence is MHDPGEHGHG…EHAHGHTHEH (76 aa). A GTP-binding site is contributed by 105–112; that stretch reads GPVGSGKT.

It belongs to the SIMIBI class G3E GTPase family. UreG subfamily. As to quaternary structure, homodimer. UreD, UreF and UreG form a complex that acts as a GTP-hydrolysis-dependent molecular chaperone, activating the urease apoprotein by helping to assemble the nickel containing metallocenter of UreC. The UreE protein probably delivers the nickel.

It is found in the cytoplasm. Functionally, facilitates the functional incorporation of the urease nickel metallocenter. This process requires GTP hydrolysis, probably effectuated by UreG. This is Urease accessory protein UreG from Sorangium cellulosum (strain So ce56) (Polyangium cellulosum (strain So ce56)).